Reading from the N-terminus, the 144-residue chain is Probable DNA-directed RNA polymerases I and III subunit RPAC2 (144 aa).

The tract at residues lysine 14–glutamate 47 is disordered. Residues glutamate 18–leucine 38 show a composition bias toward acidic residues.

This sequence belongs to the archaeal Rpo11/eukaryotic RPB11/RPC19 RNA polymerase subunit family. In terms of assembly, component of the RNA polymerase I (Pol I) and RNA polymerase III (Pol III) complexes consisting of at least 13 and 17 subunits, respectively.

The protein localises to the nucleus. DNA-dependent RNA polymerase catalyzes the transcription of DNA into RNA using the four ribonucleoside triphosphates as substrates. Common core component of RNA polymerases I and III which synthesize ribosomal RNA precursors and small RNAs, such as 5S rRNA and tRNAs, respectively. The protein is Probable DNA-directed RNA polymerases I and III subunit RPAC2 (rpac-19) of Caenorhabditis elegans.